Here is a 182-residue protein sequence, read N- to C-terminus: MEINKFICSQGPKKNSCEDFWRMVLEQESCIIVSLTETDDEDQVCYEYWVKEEDYELAFGRYVVKTLEIIEESSFTRTRLRLTDVSSDTSREIHHFWYPHWSDYGNPTNPAEILNLISKVNQKRKEMKKTADSQPGPIVVHCSAGIGRTGTFCTIDNALSQLRKEQTVCLPQTVLKIQKSKI.

The 182-residue stretch at 1–182 (MEINKFICSQ…TVLKIQKSKI (182 aa)) folds into the Tyrosine-protein phosphatase domain. The active-site Phosphocysteine intermediate is the C142.

Belongs to the protein-tyrosine phosphatase family.

The enzyme catalyses O-phospho-L-tyrosyl-[protein] + H2O = L-tyrosyl-[protein] + phosphate. This Microplitis demolitor (Parasitoid wasp) protein is Probable tyrosine phosphatase protein H4 (H5).